The following is an 870-amino-acid chain: MOG interacting and ectopic P-granules protein 1 (870 aa).

The interval 1–244 (MVTADETVLA…VPEEDNNEQA (244 aa)) is disordered. A compositionally biased stretch (polar residues) spans 9–20 (LATTTNTTSMSV). Residues 41–51 (EQLKAEQREVM) show a composition bias toward basic and acidic residues. 3 stretches are compositionally biased toward acidic residues: residues 77-99 (EVIEIDDTEESTDPSPDGSDENG), 129-142 (IEQDDDGDVMEITE), and 203-214 (IELDDDDDDEIQ). 2 consecutive C2H2-type zinc fingers follow at residues 421–444 (HRCDVCGFQTESKLVMSTHKENLH) and 450–473 (FQCTMCKETDTSEQRMKDHYFETH). The CCHC-type zinc-finger motif lies at 486–508 (YPCAICEEDFNFKGVREQHYKQC). Polar residues-rich tracts occupy residues 673-688 (LQAAVNSMRSQNSQKT) and 695-708 (KLVTTPSHATVGSS). The disordered stretch occupies residues 673–708 (LQAAVNSMRSQNSQKTPTHRSSKLVTTPSHATVGSS). 4 consecutive C2H2-type zinc fingers follow at residues 713–736 (FVCEICDASVQEKEKYLQHLQTTH), 753–776 (LACSRCRDRFWTYEGLERHLVMSH), 794–815 (GRCKTCGKNYAFNMLQHLVADH), and 826–849 (YSCDVCAFKCSSYQTLEAHLTSNH). Residues 847–870 (SNHPKGDKKTSTPAKKDDCITLDD) form a disordered region. A compositionally biased stretch (basic and acidic residues) spans 850 to 870 (PKGDKKTSTPAKKDDCITLDD).

Interacts with hda-1, let-418, lin-1, mog-1, mog-4, mog-5, mog-6, pie-1 and unc-98. In terms of processing, sumoylated. As to expression, expressed in somatic cells of embryos, the head, hypodermis and tail of larvae and the germline of adults, including oocytes but not mature sperm and spermatocytes.

The protein localises to the nucleus. Functionally, has a broad role in development, specifically in the genetic pathway SynMuvB that negatively regulates specification of the vulval cell fate. Required for fem-3 3'-UTR-mediated repression in the regulation of the sperm/oocyte switch. Acts by regulating the translation of fem-3 mRNA, by binding to its 3'-UTR. This is MOG interacting and ectopic P-granules protein 1 from Caenorhabditis elegans.